We begin with the raw amino-acid sequence, 129 residues long: Small ribosomal subunit protein uS11 (129 aa).

This sequence belongs to the universal ribosomal protein uS11 family. In terms of assembly, part of the 30S ribosomal subunit. Interacts with proteins S7 and S18. Binds to IF-3.

Its function is as follows. Located on the platform of the 30S subunit, it bridges several disparate RNA helices of the 16S rRNA. Forms part of the Shine-Dalgarno cleft in the 70S ribosome. This chain is Small ribosomal subunit protein uS11, found in Bacteroides thetaiotaomicron (strain ATCC 29148 / DSM 2079 / JCM 5827 / CCUG 10774 / NCTC 10582 / VPI-5482 / E50).